Reading from the N-terminus, the 586-residue chain is Ezrin (586 aa).

Residues 2–295 enclose the FERM domain; that stretch reads PKPINVRVTT…GNHELYMRRR (294 aa). An N6-acetyllysine modification is found at K60. The short motif at 115–120 is the [IL]-x-C-x-x-[DE] motif element; the sequence is IYCPPE. Position 146 is a phosphotyrosine; by PDGFR (Y146). Residues 244–586 are interaction with SCYL3; sequence EIRNISFNDK…KQRIDEFEAM (343 aa). Residues 302 to 462 are a coiled coil; that stretch reads VQQMKAQARE…QDDLVKTKEE (161 aa). The disordered stretch occupies residues 306–338; it reads KAQAREEKHQKQLERQQLETEKKRRETVEREKE. Basic and acidic residues predominate over residues 308–338; the sequence is QAREEKHQKQLERQQLETEKKRRETVEREKE. Y354 bears the Phosphotyrosine; by PDGFR mark. Phosphoserine is present on S366. Y478 bears the Phosphotyrosine mark. A disordered region spans residues 534-565; the sequence is LSNELSQARDENKRTHNDIIHNENMRQGRDKY. S535 carries the phosphoserine modification. Over residues 540-565 the composition is skewed to basic and acidic residues; sequence QARDENKRTHNDIIHNENMRQGRDKY. T567 is modified (phosphothreonine; by ROCK2 and PKC/PRKCI).

In terms of assembly, interacts with PALS1 and NHERF2. Found in a complex with EZR, PODXL and NHERF2. Interacts with MCC, PLEKHG6, PODXL, SCYL3/PACE1, NHERF1 and TMEM8B. Interacts (when phosphorylated) with FES/FPS. Interacts with dimeric S100P, the interaction may be activating through unmasking of F-actin binding sites. Identified in complexes that contain VIM, EZR, AHNAK, BFSP1, BFSP2, ANK2, PLEC, PRX and spectrin. Detected in a complex composed of at least EZR, AHNAK, PPL and PRX. Interacts with PDPN (via cytoplasmic domain); activates RHOA and promotes epithelial-mesenchymal transition. Interacts with SPN/CD43 cytoplasmic tail. Interacts with CD44 and ICAM2. Interacts with SLC9A3; interaction targets SLC9A3 to the apical membrane. Interacts with SLC9A1; regulates interactions of SLC9A1 with cytoskeletal and promotes stress fiber formation. Interacts with CLIC5; may work together in a complex which also includes RDX and MYO6 to stabilize linkages between the plasma membrane and subjacent actin cytoskeleton at the base of stereocilia. Post-translationally, phosphorylated by tyrosine-protein kinases. Phosphorylation by ROCK2 suppresses the head-to-tail association of the N-terminal and C-terminal halves resulting in an opened conformation which is capable of actin and membrane-binding. In terms of processing, S-nitrosylation is induced by interferon-gamma and oxidatively-modified low-densitity lipoprotein (LDL(ox)) possibly implicating the iNOS-S100A8/9 transnitrosylase complex. In terms of tissue distribution, detected in eye lens fiber cells. Expressed in cerebrum and cerebellum (at protein level). Component of the microvilli of intestinal epithelial cells.

The protein resides in the apical cell membrane. It is found in the cell projection. It localises to the microvillus membrane. The protein localises to the ruffle membrane. Its subcellular location is the cytoplasm. The protein resides in the cell cortex. It is found in the cytoskeleton. It localises to the microvillus. Its activity is regulated as follows. A head-to-tail association, of the N-terminal and C-terminal halves results in a closed conformation (inactive form) which is incapable of actin or membrane-binding. Its function is as follows. Probably involved in connections of major cytoskeletal structures to the plasma membrane. In epithelial cells, required for the formation of microvilli and membrane ruffles on the apical pole. Along with PLEKHG6, required for normal macropinocytosis. In Mus musculus (Mouse), this protein is Ezrin (Ezr).